A 277-amino-acid chain; its full sequence is Undecaprenyl-diphosphatase (277 aa).

7 helical membrane-spanning segments follow: residues 5–25 (WTAA…FLPI), 44–64 (RAMA…VWEF), 86–106 (LNLL…ADTI), 110–130 (LFNA…MLWA), 184–204 (AATE…AVYS), 219–239 (VFAI…RALL), and 255–275 (IAFG…WASA).

Belongs to the UppP family.

The protein localises to the cell inner membrane. It carries out the reaction di-trans,octa-cis-undecaprenyl diphosphate + H2O = di-trans,octa-cis-undecaprenyl phosphate + phosphate + H(+). Its function is as follows. Catalyzes the dephosphorylation of undecaprenyl diphosphate (UPP). Confers resistance to bacitracin. The polypeptide is Undecaprenyl-diphosphatase (Pseudomonas savastanoi pv. phaseolicola (strain 1448A / Race 6) (Pseudomonas syringae pv. phaseolicola (strain 1448A / Race 6))).